A 143-amino-acid chain; its full sequence is Calcitonin (143 aa).

An N-terminal signal peptide occupies residues 1–25 (MGFGKSSPFLAFSILVLCQAGSLQA). A propeptide spanning residues 26-84 (TPLRSALETLPDPGALSEKEGRLLLAALVKAYVQRKTNELEQEEEQEETEDSSLDSSRA) is cleaved from the precursor. Position 42 is a phosphoserine (serine 42). Residues 62–86 (TNELEQEEEQEETEDSSLDSSRAKR) form a disordered region. Residues 65 to 78 (LEQEEEQEETEDSS) are compositionally biased toward acidic residues. A disulfide bond links cysteine 87 and cysteine 93. The interval 112–143 (GFGPETPGKKRDIANSLEKDLSSHFGVPTDAN) is disordered. Proline 118 is subject to Proline amide. Basic and acidic residues predominate over residues 118–133 (PGKKRDIANSLEKDLS). Residues 122–143 (RDIANSLEKDLSSHFGVPTDAN) constitute a propeptide that is removed on maturation.

It belongs to the calcitonin family.

It localises to the secreted. Functionally, calcitonin is a peptide hormone that causes a rapid but short-lived drop in the level of calcium and phosphate in blood by promoting the incorporation of those ions in the bones. Calcitonin function is mediated by the calcitonin receptor/CALCR and the CALCR-RAMP2 (AMYR2) receptor complex. This is Calcitonin (CALCA) from Ovis aries (Sheep).